A 91-amino-acid polypeptide reads, in one-letter code: Small ribosomal subunit protein uS19 (91 aa).

The protein belongs to the universal ribosomal protein uS19 family.

In terms of biological role, protein S19 forms a complex with S13 that binds strongly to the 16S ribosomal RNA. This is Small ribosomal subunit protein uS19 from Shouchella clausii (strain KSM-K16) (Alkalihalobacillus clausii).